The following is a 219-amino-acid chain: PRELI domain-containing protein 1, mitochondrial (219 aa).

Residues 36–174 enclose the PRELI/MSF1 domain; that stretch reads TEDIVHREVT…ILAKLQGEAP (139 aa).

Forms a complex with TRIAP1 in the mitochondrion intermembrane space. Interacts with OPA1 and AIFM1. As to expression, highly expressed in fetal liver; less expressed in fetal brain, lung, and kidney. At the adult stage, expression is drastically reduced in the liver but highly expressed in the spleen, brain, lung, lymph nodes and peripheral blood leukocytes.

Its subcellular location is the mitochondrion. The protein resides in the mitochondrion intermembrane space. The enzyme catalyses a 1,2-diacyl-sn-glycero-3-phosphate(in) = a 1,2-diacyl-sn-glycero-3-phosphate(out). Involved in the modulation of the mitochondrial apoptotic pathway by ensuring the accumulation of cardiolipin (CL) in mitochondrial membranes. In vitro, the TRIAP1:PRELID1 complex mediates the transfer of phosphatidic acid (PA) between liposomes and probably functions as a PA transporter across the mitochondrion intermembrane space to provide PA for CL synthesis in the inner membrane. Regulates the mitochondrial apoptotic pathway in primary Th cells. Regulates Th cell differentiation by down-regulating STAT6 thereby reducing IL-4-induced Th2 cell number. May be important for the development of vital and immunocompetent organs. The protein is PRELI domain-containing protein 1, mitochondrial (PRELID1) of Homo sapiens (Human).